The primary structure comprises 97 residues: Large ribosomal subunit protein bL25 (97 aa).

Belongs to the bacterial ribosomal protein bL25 family. Part of the 50S ribosomal subunit; part of the 5S rRNA/L5/L18/L25 subcomplex. Contacts the 5S rRNA. Binds to the 5S rRNA independently of L5 and L18.

Its function is as follows. This is one of the proteins that binds to the 5S RNA in the ribosome where it forms part of the central protuberance. The polypeptide is Large ribosomal subunit protein bL25 (Buchnera aphidicola subsp. Baizongia pistaciae (strain Bp)).